We begin with the raw amino-acid sequence, 250 residues long: Peptidyl-tRNA hydrolase, mitochondrial (250 aa).

The transit peptide at 1 to 45 (MRLLSGASASRIPCPLLSLARARARCLPVPASATACRAASSSAAA) directs the protein to the mitochondrion. Tyrosine 68 contributes to the tRNA binding site. Catalysis depends on histidine 73, which acts as the Proton acceptor. 3 residues coordinate tRNA: phenylalanine 118, asparagine 120, and asparagine 166.

It belongs to the PTH family.

The protein resides in the mitochondrion. It carries out the reaction an N-acyl-L-alpha-aminoacyl-tRNA + H2O = an N-acyl-L-amino acid + a tRNA + H(+). In terms of biological role, the natural substrate for this enzyme may be peptidyl-tRNAs which drop off the ribosome during protein synthesis. This Oryza sativa subsp. japonica (Rice) protein is Peptidyl-tRNA hydrolase, mitochondrial.